Consider the following 386-residue polypeptide: uncharacterized protein (386 aa).

11 consecutive transmembrane segments (helical) span residues 3-23 (WFSL…LVAI), 42-62 (LVGH…IFLW), 72-92 (FASF…SLFG), 102-122 (VPTI…LGVF), 145-165 (ILST…IAYF), 183-203 (FGGH…WLLL), 212-232 (WFLN…QIFL), 244-264 (TWGY…ITLV), 276-296 (ILVL…MIVG), 308-328 (VIAS…QELG), and 333-353 (LGKF…FLSS).

To R.prowazekii RP382.

It localises to the cell membrane. This is an uncharacterized protein from Aquifex aeolicus (strain VF5).